Consider the following 430-residue polypeptide: Inactive metallocarboxypeptidase ECM14 (430 aa).

Residues 1–24 form the signal peptide; that stretch reads MLHMNSLWGCFLFVLLAVTGAVQG. Positions 25-105 are excised as a propeptide; it reads LQEDYSEYAV…TLPTSQMMAR (81 aa). N-linked (GlcNAc...) asparagine glycosylation is present at asparagine 41. Residues 120 to 425 enclose the Peptidase M14 domain; it reads EYRDLDTIYM…AALKYFCDFL (306 aa). Residues histidine 182 and glutamate 185 each contribute to the Zn(2+) site. Residues 182–185, arginine 240, and 257–258 contribute to the substrate site; these read HARE and DH. Cysteine 251 and cysteine 272 are disulfide-bonded. A glycan (N-linked (GlcNAc...) asparagine) is linked at asparagine 295. Position 310 (histidine 310) interacts with Zn(2+). 311–312 is a substrate binding site; that stretch reads SY.

This sequence belongs to the peptidase M14 family. The cofactor is Zn(2+). N-glycosylated.

It localises to the vacuole. Its subcellular location is the secreted. In terms of biological role, inactive carboxypeptidase that may play a role in cell wall organization and biogenesis. This is Inactive metallocarboxypeptidase ECM14 from Saccharomyces cerevisiae (strain ATCC 204508 / S288c) (Baker's yeast).